Here is a 144-residue protein sequence, read N- to C-terminus: MNMFATQGGVVELWVTKTDTYTSTKTGEIYASVQSIAPIPEGARGNAKGFEISEYNIEPTLLDAIVFEGQPVLCKFASVVRPTQDRFGRITNTQVLVDLLAVGGKPMAPTAQAPARPQAQAQAPRPAQQPQGQDKQDKSPDAKA.

Residues 106-144 (PMAPTAQAPARPQAQAQAPRPAQQPQGQDKQDKSPDAKA) are disordered. The span at 108-133 (APTAQAPARPQAQAQAPRPAQQPQGQ) shows a compositional bias: low complexity. A compositionally biased stretch (basic and acidic residues) spans 134–144 (DKQDKSPDAKA).

It belongs to the inovirus G5P protein family. In terms of assembly, homodimer.

In terms of biological role, binds to DNA in a highly cooperative manner without pronounced sequence specificity. During synthesis of the single-stranded (progeny) viral DNA, prevents the conversion into the double-stranded replicative form. G5P is displaced by the capsid protein G8P during phage assembly on the inner bacterial membrane. The protein is DNA-Binding protein G5P (V) of Pseudomonas aeruginosa (Bacteriophage Pf1).